We begin with the raw amino-acid sequence, 477 residues long: Tripartite motif-containing protein 72 (477 aa).

Zn(2+)-binding residues include Leu-14, Pro-17, Pro-29, Cys-31, Thr-34, Gln-37, Thr-53, Pro-56, Gly-86, Leu-89, Val-97, Glu-100, Leu-105, Gly-108, Gly-114, and Lys-117. The RING-type zinc finger occupies 16–59 (CPLCLELFRAPVTPECGHTFCQGCLTGAPKNQDQNGSTPCPTCQ). A B box-type zinc finger spans residues 83–124 (VPKGHCLEHLDPLSVYCEQDKELICGVCASLGKHKGHNIITA). Residues 135-232 (LPQQQVILQE…QMDGVLKDVE (98 aa)) adopt a coiled-coil conformation. Residues 272-476 (DEFKFQVWRK…LKIFYPPAEQ (205 aa)) enclose the B30.2/SPRY domain.

It belongs to the TRIM/RBCC family. As to quaternary structure, homodimer. Homooligomer; disulfide-linked. Oligomerizes on the phospholipid membrane. In terms of processing, disulfide bond formation at Cys-244 occurs in case of membrane damage that cause the entry of the oxidized milieu of the extracellular space, resulting in homooligomerization.

The protein localises to the cell membrane. It localises to the sarcolemma. It is found in the cytoplasmic vesicle membrane. The enzyme catalyses S-ubiquitinyl-[E2 ubiquitin-conjugating enzyme]-L-cysteine + [acceptor protein]-L-lysine = [E2 ubiquitin-conjugating enzyme]-L-cysteine + N(6)-ubiquitinyl-[acceptor protein]-L-lysine.. Its pathway is protein modification; protein ubiquitination. Specifically binds phosphatidylserine. The binding to phospholipids enhances ubiquitination activity. Muscle-specific E3 ubiquitin-protein ligase that plays a central role in cell membrane repair by nucleating the assembly of the repair machinery at injury sites. Acts as a sensor of oxidation: upon membrane damage, entry of extracellular oxidative environment results in disulfide bond formation and homooligomerization at the injury site. This oligomerization acts as a nucleation site for recruitment of TRIM72-containing vesicles to the injury site, leading to membrane patch formation. Probably acts upstream of the Ca(2+)-dependent membrane resealing process. Required for transport of DYSF to sites of cell injury during repair patch formation. Regulates membrane budding and exocytosis. May be involved in the regulation of the mobility of KCNB1-containing endocytic vesicles. The protein is Tripartite motif-containing protein 72 (trim72) of Xenopus tropicalis (Western clawed frog).